We begin with the raw amino-acid sequence, 623 residues long: Zinc finger protein 131 (623 aa).

The 65-residue stretch at 34 to 98 folds into the BTB domain; that stretch reads TDITLIVDGH…TYTAKLMIQG (65 aa). A Nuclear localization signal 1 motif is present at residues 137 to 148; that stretch reads TGKNEAKKRKIA. C2H2-type zinc fingers lie at residues 261-283, 288-311, and 328-350; these read FHCEKCNRSFKLFYHFKEHMKSH, FKCEICNKRYLRESAWKQHLNCYH, and HVCQYCEKQFDHFGHFKEHLRKH. Glycyl lysine isopeptide (Lys-Gly) (interchain with G-Cter in SUMO2) cross-links involve residues K289 and K295. Positions 317-328 match the Nuclear localization signal 2 motif; it reads VSKKQRTGKKIH. The segment at 356 to 381 adopts a C2H2-type 4; degenerate zinc-finger fold; that stretch reads FECPNCHERFARNSTLKCHLTACQTG. 2 consecutive C2H2-type zinc fingers follow at residues 392–414 and 420–443; these read YECQVCNSVFNSWDQFKDHLVIH and NHCTLCDLWFMQGNELRRHLSDAH. Residues 573–617 are compositionally biased toward basic and acidic residues; the sequence is NQEERESSQADAAEAAREDHEDAEDLETKPTVDSEAEKAENEDRT. The disordered stretch occupies residues 573–623; sequence NQEERESSQADAAEAAREDHEDAEDLETKPTVDSEAEKAENEDRTALPVLE. K601 participates in a covalent cross-link: Glycyl lysine isopeptide (Lys-Gly) (interchain with G-Cter in SUMO).

The protein belongs to the krueppel C2H2-type zinc-finger protein family. In terms of processing, monosumoylated at Lys-601 by CBX4 and UHRF2. Sumoylation may potentiate ZNF131 inhibition of estrogen signaling. Sumoylation does not interfere with ubiquitination. Post-translationally, ubiquitinated. Predominant expression is found in different brain areas such as the occipital and temporal lobe, the nucleus caudatus, hippocampus, and the cerebellum as well as in testis and thymus.

Its subcellular location is the nucleus. Plays a role during development and organogenesis as well as in the function of the adult central nervous system. May be involved in transcriptional regulation as a repressor of ESR1/ER-alpha signaling. In Homo sapiens (Human), this protein is Zinc finger protein 131 (ZNF131).